The chain runs to 504 residues: Anaerobic nitric oxide reductase transcription regulator NorR (504 aa).

4-aspartylphosphate is present on D57. A Sigma-54 factor interaction domain is found at 187–416 (MIGLSPGMTQ…LEHAIHRAVV (230 aa)). Residues 215–222 (GETGTGKE) and 278–287 (ADNGTLFLDE) contribute to the ATP site. Positions 479-498 (WAACARMLETDVANLHRLAK) form a DNA-binding region, H-T-H motif.

Its pathway is nitrogen metabolism; nitric oxide reduction. Its function is as follows. Required for the expression of anaerobic nitric oxide (NO) reductase, acts as a transcriptional activator for at least the norVW operon. Activation also requires sigma-54. This Escherichia coli O8 (strain IAI1) protein is Anaerobic nitric oxide reductase transcription regulator NorR.